The following is a 195-amino-acid chain: Probable DNA-directed RNA polymerase subunit delta (195 aa).

The HTH HARE-type domain occupies 14-83; sequence LSMIEVARAI…GDNKWGLRSW (70 aa). Acidic residues-rich tracts occupy residues 120–138 and 145–195; these read DSDAIDYNADDPEDEDAYE and YDDE…TSEE. Positions 120 to 195 are disordered; that stretch reads DSDAIDYNAD…SDDDAETSEE (76 aa).

The protein belongs to the RpoE family. As to quaternary structure, RNAP is composed of a core of 2 alpha, a beta and a beta' subunits. The core is associated with a delta subunit and one of several sigma factors.

Functionally, participates in both the initiation and recycling phases of transcription. In the presence of the delta subunit, RNAP displays an increased specificity of transcription, a decreased affinity for nucleic acids, and an increased efficiency of RNA synthesis because of enhanced recycling. The sequence is that of Probable DNA-directed RNA polymerase subunit delta from Streptococcus pneumoniae serotype 2 (strain D39 / NCTC 7466).